The following is a 62-amino-acid chain: Chromatin protein Cren7 (62 aa).

It belongs to the Cren7 family. As to quaternary structure, monomer. Post-translationally, methylated at multiple sites, to varying extents.

It is found in the chromosome. It localises to the cytoplasm. In terms of biological role, a chromatin protein, binds double-stranded DNA without sequence specificity. Constrains negative DNA supercoils. The chain is Chromatin protein Cren7 from Staphylothermus marinus (strain ATCC 43588 / DSM 3639 / JCM 9404 / F1).